The chain runs to 300 residues: Peptidyl-prolyl cis-trans isomerase E (300 aa).

The 79-residue stretch at 6–84 (RTIYVGGLAD…RTIRVNLAKP (79 aa)) folds into the RRM domain. The PPIase cyclophilin-type domain maps to 142–298 (FFDIRIGGND…QKIVIYSCGE (157 aa)).

It belongs to the cyclophilin-type PPIase family. PPIase E subfamily.

It localises to the nucleus. The catalysed reaction is [protein]-peptidylproline (omega=180) = [protein]-peptidylproline (omega=0). Its function is as follows. PPIases accelerate the folding of proteins. It catalyzes the cis-trans isomerization of proline imidic peptide bonds in oligopeptides. Combines RNA-binding and PPIase activities. The sequence is that of Peptidyl-prolyl cis-trans isomerase E (cyp33) from Drosophila melanogaster (Fruit fly).